The following is a 223-amino-acid chain: Neurotrophic factor BDNF precursor form (223 aa).

Positions 1 to 5 are cleaved as a signal peptide; it reads SCMKA. Positions 6-114 are excised as a propeptide; the sequence is APMKEVSIRG…AANMSMRVRR (109 aa). A glycan (N-linked (GlcNAc...) asparagine) is linked at Asn107. 2 cysteine pairs are disulfide-bonded: Cys127–Cys194 and Cys172–Cys223.

Belongs to the NGF-beta family.

Its subcellular location is the secreted. In terms of biological role, promotes the survival of neuronal populations that are all located either in the central nervous system or directly connected to it. In Lichanura trivirgata (Rosy boa), this protein is Neurotrophic factor BDNF precursor form (BDNF).